A 612-amino-acid polypeptide reads, in one-letter code: Isocitrate dehydrogenase kinase/phosphatase (612 aa).

Residues 327 to 333 (APGIKGL) and Lys348 contribute to the ATP site. Residue Asp383 is part of the active site. A disordered region spans residues 593 to 612 (AGRASPEPDAPADARSVRVA).

It belongs to the AceK family.

Its subcellular location is the cytoplasm. It catalyses the reaction L-seryl-[isocitrate dehydrogenase] + ATP = O-phospho-L-seryl-[isocitrate dehydrogenase] + ADP + H(+). Its function is as follows. Bifunctional enzyme which can phosphorylate or dephosphorylate isocitrate dehydrogenase (IDH) on a specific serine residue. This is a regulatory mechanism which enables bacteria to bypass the Krebs cycle via the glyoxylate shunt in response to the source of carbon. When bacteria are grown on glucose, IDH is fully active and unphosphorylated, but when grown on acetate or ethanol, the activity of IDH declines drastically concomitant with its phosphorylation. In Paraburkholderia phytofirmans (strain DSM 17436 / LMG 22146 / PsJN) (Burkholderia phytofirmans), this protein is Isocitrate dehydrogenase kinase/phosphatase.